We begin with the raw amino-acid sequence, 447 residues long: Chromosomal replication initiator protein DnaA (447 aa).

Positions 1-70 (MQDFWSKAMD…EEILSEQLGE (70 aa)) are domain I, interacts with DnaA modulators. The tract at residues 70-110 (EPVTLLFAADPALEKPVASKTQTVTPVQSGGETGDQENFHS) is domain II. Residues 87 to 109 (ASKTQTVTPVQSGGETGDQENFH) are disordered. Polar residues predominate over residues 88 to 99 (SKTQTVTPVQSG). Residues 111 to 327 (GLDPRYTFDS…GALIRVSAYA (217 aa)) are domain III, AAA+ region. ATP-binding residues include G155, G157, K158, and T159. The interval 328-447 (SLTGKPITMA…LASLKSMLQK (120 aa)) is domain IV, binds dsDNA.

It belongs to the DnaA family. In terms of assembly, oligomerizes as a right-handed, spiral filament on DNA at oriC.

The protein localises to the cytoplasm. Plays an essential role in the initiation and regulation of chromosomal replication. ATP-DnaA binds to the origin of replication (oriC) to initiate formation of the DNA replication initiation complex once per cell cycle. Binds the DnaA box (a 9 base pair repeat at the origin) and separates the double-stranded (ds)DNA. Forms a right-handed helical filament on oriC DNA; dsDNA binds to the exterior of the filament while single-stranded (ss)DNA is stabiized in the filament's interior. The ATP-DnaA-oriC complex binds and stabilizes one strand of the AT-rich DNA unwinding element (DUE), permitting loading of DNA polymerase. After initiation quickly degrades to an ADP-DnaA complex that is not apt for DNA replication. Binds acidic phospholipids. This Magnetococcus marinus (strain ATCC BAA-1437 / JCM 17883 / MC-1) protein is Chromosomal replication initiator protein DnaA.